The following is a 400-amino-acid chain: Snake venom metalloproteinase H1 (400 aa).

A signal peptide spans 1 to 6 (FPYQGS). A propeptide spanning residues 7-176 (SIILESGNVN…KKASQLIVST (170 aa)) is cleaved from the precursor. Residues 180-377 (RYMEIVIVVD…ENPPCILNKP (198 aa)) enclose the Peptidase M12B domain. Positions 183 and 267 each coordinate Ca(2+). 3 cysteine pairs are disulfide-bonded: cysteine 291–cysteine 372, cysteine 331–cysteine 356, and cysteine 333–cysteine 339. Histidine 316 provides a ligand contact to Zn(2+). Glutamate 317 is an active-site residue. The Zn(2+) site is built by histidine 320 and histidine 326. Ca(2+)-binding residues include cysteine 372, asparagine 375, valine 387, asparagine 390, leucine 392, glutamate 394, and aspartate 400. Residues 378 to 400 (LRTDTVSTPVSGNELLEAGKDYD) constitute a propeptide that is removed on maturation.

Belongs to the venom metalloproteinase (M12B) family. P-I subfamily. In terms of assembly, monomer. Requires Zn(2+) as cofactor. Expressed by the venom gland.

Its subcellular location is the secreted. Its function is as follows. Snake venom metalloproteinase that impairs hemostasis in the envenomed animal. The sequence is that of Snake venom metalloproteinase H1 from Deinagkistrodon acutus (Hundred-pace snake).